Consider the following 524-residue polypeptide: Bifunctional purine biosynthesis protein PurH (524 aa).

One can recognise an MGS-like domain in the interval 1-145; the sequence is MIQQALLSVS…KNHRDVTVIV (145 aa).

Belongs to the PurH family.

It catalyses the reaction (6R)-10-formyltetrahydrofolate + 5-amino-1-(5-phospho-beta-D-ribosyl)imidazole-4-carboxamide = 5-formamido-1-(5-phospho-D-ribosyl)imidazole-4-carboxamide + (6S)-5,6,7,8-tetrahydrofolate. It carries out the reaction IMP + H2O = 5-formamido-1-(5-phospho-D-ribosyl)imidazole-4-carboxamide. The protein operates within purine metabolism; IMP biosynthesis via de novo pathway; 5-formamido-1-(5-phospho-D-ribosyl)imidazole-4-carboxamide from 5-amino-1-(5-phospho-D-ribosyl)imidazole-4-carboxamide (10-formyl THF route): step 1/1. It functions in the pathway purine metabolism; IMP biosynthesis via de novo pathway; IMP from 5-formamido-1-(5-phospho-D-ribosyl)imidazole-4-carboxamide: step 1/1. The protein is Bifunctional purine biosynthesis protein PurH of Ralstonia pickettii (strain 12J).